Here is a 334-residue protein sequence, read N- to C-terminus: ADP-L-glycero-D-manno-heptose-6-epimerase (334 aa).

Residues 11–12 (FI), 32–33 (DN), Lys-39, Lys-54, 77–81 (QGACS), and Asn-94 contribute to the NADP(+) site. Catalysis depends on Tyr-141, which acts as the Proton acceptor. NADP(+) is bound at residue Lys-145. Residue Asn-171 coordinates substrate. Residues Val-172 and Lys-180 each contribute to the NADP(+) site. Lys-180 functions as the Proton acceptor in the catalytic mechanism. Residues Arg-182, His-189, 203–206 (FGSN), Arg-216, and Tyr-295 each bind substrate.

It belongs to the NAD(P)-dependent epimerase/dehydratase family. HldD subfamily. Homopentamer. NADP(+) is required as a cofactor.

It catalyses the reaction ADP-D-glycero-beta-D-manno-heptose = ADP-L-glycero-beta-D-manno-heptose. It functions in the pathway nucleotide-sugar biosynthesis; ADP-L-glycero-beta-D-manno-heptose biosynthesis; ADP-L-glycero-beta-D-manno-heptose from D-glycero-beta-D-manno-heptose 7-phosphate: step 4/4. The protein operates within bacterial outer membrane biogenesis; LOS core biosynthesis. In terms of biological role, catalyzes the interconversion between ADP-D-glycero-beta-D-manno-heptose and ADP-L-glycero-beta-D-manno-heptose via an epimerization at carbon 6 of the heptose. This chain is ADP-L-glycero-D-manno-heptose-6-epimerase, found in Neisseria meningitidis serogroup B (strain ATCC BAA-335 / MC58).